Reading from the N-terminus, the 729-residue chain is Rab-like protein 6 (729 aa).

Residue M1 is modified to N-acetylmethionine. Residues 39–279 are small GTPase-like; the sequence is GVQYNMKIVI…IFLEMMEARS (241 aa). Residues 50-57, 100-104, and 177-179 each bind GTP; these read GDRNTGKT, DVVDK, and YRD. The segment at 281–729 is disordered; it reads GHASPLAANG…HPGGGDYEEL (449 aa). Positions 290–315 are enriched in low complexity; sequence GQSPSPGSQSPVVPAGAVSTGSSSPG. The span at 331–351 shows a compositional bias: pro residues; it reads SSVPPVPPSEALPPPACPSAP. Residues 395–416 are compositionally biased toward basic and acidic residues; it reads PDDRLDRSFLEDTTPARDEKKV. A phosphoserine mark is found at S402, S425, S427, S470, S471, S492, S525, and S577. Positions 489–502 are enriched in polar residues; the sequence is QQCSEPETKWSSIP. Positions 581–595 are enriched in basic and acidic residues; that stretch reads DTQRRADDFPVRDDP. A Phosphoserine modification is found at S596. The segment covering 596-605 has biased composition (acidic residues); the sequence is SDVTDEDEGP. At T599 the chain carries Phosphothreonine. Over residues 606–615 the composition is skewed to pro residues; the sequence is AEPPPPPKLP. Residues 635 to 652 are compositionally biased toward basic and acidic residues; sequence AGPKESSEEGKEGKTPSK. A phosphoserine mark is found at S640 and S641. The interaction with CDKN2A stretch occupies residues 655 to 693; the sequence is KKKKKKGKEEEEKAAKKKSKHKKSKDKEEGKEERRRRQQ. The span at 669–678 shows a compositional bias: basic residues; the sequence is AKKKSKHKKS. The segment covering 679-689 has biased composition (basic and acidic residues); sequence KDKEEGKEERR. Residues 711-729 are compositionally biased toward gly residues; the sequence is LGGGAPGGRHPGGGDYEEL.

It belongs to the small GTPase superfamily. Rab family. Post-translationally, isoform 1 is O-glycosylated, while other isoforms are not.

It is found in the cytoplasm. Its subcellular location is the nucleus. Functionally, may enhance cellular proliferation. May reduce growth inhibitory activity of CDKN2A. This is Rab-like protein 6 (RABL6) from Homo sapiens (Human).